A 340-amino-acid polypeptide reads, in one-letter code: Ketol-acid reductoisomerase (NADP(+)) (340 aa).

The 182-residue stretch at 1–182 (MRVYYDRDCD…GGGRSGIIET (182 aa)) folds into the KARI N-terminal Rossmann domain. NADP(+) contacts are provided by residues 24 to 27 (YGSQ), Arg48, Ser51, Ser53, and 83 to 86 (DELQ). His108 is an active-site residue. Residue Gly134 participates in NADP(+) binding. The 147-residue stretch at 183–329 (NFREECETDL…AKLREMMPWI (147 aa)) folds into the KARI C-terminal knotted domain. Mg(2+) contacts are provided by Asp191, Glu195, Glu227, and Glu231. Ser252 is a binding site for substrate.

It belongs to the ketol-acid reductoisomerase family. Requires Mg(2+) as cofactor.

It catalyses the reaction (2R)-2,3-dihydroxy-3-methylbutanoate + NADP(+) = (2S)-2-acetolactate + NADPH + H(+). The enzyme catalyses (2R,3R)-2,3-dihydroxy-3-methylpentanoate + NADP(+) = (S)-2-ethyl-2-hydroxy-3-oxobutanoate + NADPH + H(+). It participates in amino-acid biosynthesis; L-isoleucine biosynthesis; L-isoleucine from 2-oxobutanoate: step 2/4. It functions in the pathway amino-acid biosynthesis; L-valine biosynthesis; L-valine from pyruvate: step 2/4. Functionally, involved in the biosynthesis of branched-chain amino acids (BCAA). Catalyzes an alkyl-migration followed by a ketol-acid reduction of (S)-2-acetolactate (S2AL) to yield (R)-2,3-dihydroxy-isovalerate. In the isomerase reaction, S2AL is rearranged via a Mg-dependent methyl migration to produce 3-hydroxy-3-methyl-2-ketobutyrate (HMKB). In the reductase reaction, this 2-ketoacid undergoes a metal-dependent reduction by NADPH to yield (R)-2,3-dihydroxy-isovalerate. The sequence is that of Ketol-acid reductoisomerase (NADP(+)) from Ruegeria sp. (strain TM1040) (Silicibacter sp.).